We begin with the raw amino-acid sequence, 140 residues long: MALERTLSIIKPDATKRNLTGKINAVFEGAGLRIVAQKRIQLTEKQAGAFYAVHKERPFYGSLVSSMIAEPVVVQVLQGENAVAKNREVMGATNPADAAEGTVRKLFAESIEANSVHGSDSLENAKNEISFFFAETEILP.

6 residues coordinate ATP: Lys-11, Phe-59, Arg-87, Thr-93, Arg-104, and Asn-114. The active-site Pros-phosphohistidine intermediate is His-117.

The protein belongs to the NDK family. As to quaternary structure, homotetramer. Requires Mg(2+) as cofactor.

The protein localises to the cytoplasm. The enzyme catalyses a 2'-deoxyribonucleoside 5'-diphosphate + ATP = a 2'-deoxyribonucleoside 5'-triphosphate + ADP. It carries out the reaction a ribonucleoside 5'-diphosphate + ATP = a ribonucleoside 5'-triphosphate + ADP. Its function is as follows. Major role in the synthesis of nucleoside triphosphates other than ATP. The ATP gamma phosphate is transferred to the NDP beta phosphate via a ping-pong mechanism, using a phosphorylated active-site intermediate. The polypeptide is Nucleoside diphosphate kinase (Gluconobacter oxydans (strain 621H) (Gluconobacter suboxydans)).